Here is a 705-residue protein sequence, read N- to C-terminus: Tryptophan synthase (705 aa).

The segment at 1-293 (MEAIKKVFEQ…QLTPNAETAK (293 aa)) is tryptophan synthase alpha chain. Catalysis depends on proton acceptor residues glutamate 49 and aspartate 60. The segment at 266–287 (KGEPSRVRSPGAAQRTPSQLTP) is disordered. The tract at residues 294 to 705 (GVENILPARF…HVSSNAIPSK (412 aa)) is tryptophan synthase beta chain. The residue at position 381 (lysine 381) is an N6-(pyridoxal phosphate)lysine.

It in the N-terminal section; belongs to the TrpA family. This sequence in the C-terminal section; belongs to the TrpB family. It depends on pyridoxal 5'-phosphate as a cofactor.

The enzyme catalyses (1S,2R)-1-C-(indol-3-yl)glycerol 3-phosphate + L-serine = D-glyceraldehyde 3-phosphate + L-tryptophan + H2O. Its pathway is amino-acid biosynthesis; L-tryptophan biosynthesis; L-tryptophan from chorismate: step 5/5. This Coprinopsis cinerea (Inky cap fungus) protein is Tryptophan synthase (TRP-1).